Consider the following 142-residue polypeptide: Hemoglobin subunit alpha-A (142 aa).

Residues valine 2–arginine 142 enclose the Globin domain. Histidine 59 contacts O2. A heme b-binding site is contributed by histidine 88.

It belongs to the globin family. In terms of assembly, heterotetramer of two alpha chains and two beta chains. In terms of tissue distribution, red blood cells.

In terms of biological role, involved in oxygen transport from the lung to the various peripheral tissues. In Mareca penelope (Eurasian wigeon), this protein is Hemoglobin subunit alpha-A (HBAA).